The chain runs to 310 residues: Zinc-finger homeodomain protein 3 (310 aa).

The disordered stretch occupies residues methionine 1 to histidine 64. Positions leucine 39–leucine 56 are enriched in polar residues. The segment at tyrosine 87 to glutamate 136 adopts a ZF-HD dimerization-type; degenerate zinc-finger fold. Disordered stretches follow at residues threonine 184 to asparagine 220 and leucine 281 to proline 310. The segment covering glutamate 190–glycine 199 has biased composition (acidic residues). The homeobox DNA-binding region spans lysine 222 to serine 285. Low complexity predominate over residues leucine 281–asparagine 291. The span at valine 292–proline 310 shows a compositional bias: polar residues.

As to quaternary structure, homo- and heterodimer with other ZFHD proteins. Interacts with MIF2 and MIF3; these interactions prevent nuclear localization and DNA-binding to inhibit transcription regulation activity. Binds to ZHD1, ZHD2 and ZHD11. Interacts with HIPP30. Interacts with KIN10, KIN11 and FLZ8. Mostly expressed in flowers and inflorescence.

The protein localises to the nucleus. Putative transcription factor. This is Zinc-finger homeodomain protein 3 (ZHD3) from Arabidopsis thaliana (Mouse-ear cress).